The primary structure comprises 158 residues: NADPH-dependent 7-cyano-7-deazaguanine reductase (158 aa).

Cysteine 56 functions as the Thioimide intermediate in the catalytic mechanism. The active-site Proton donor is aspartate 63. Substrate is bound by residues 78–80 and 97–98; these read LES and HE.

Belongs to the GTP cyclohydrolase I family. QueF type 1 subfamily.

The protein localises to the cytoplasm. It carries out the reaction 7-aminomethyl-7-carbaguanine + 2 NADP(+) = 7-cyano-7-deazaguanine + 2 NADPH + 3 H(+). It functions in the pathway tRNA modification; tRNA-queuosine biosynthesis. In terms of biological role, catalyzes the NADPH-dependent reduction of 7-cyano-7-deazaguanine (preQ0) to 7-aminomethyl-7-deazaguanine (preQ1). This Rhodopseudomonas palustris (strain TIE-1) protein is NADPH-dependent 7-cyano-7-deazaguanine reductase.